Reading from the N-terminus, the 245-residue chain is Short-chain dehydrogenase/reductase pyiH (245 aa).

Residues Ile-18, Arg-42, Asp-68, and Asn-95 each coordinate NADP(+). The active-site Proton donor is the Ser-150.

This sequence belongs to the short-chain dehydrogenases/reductases (SDR) family.

The protein operates within mycotoxin biosynthesis. In terms of biological role, short-chain dehydrogenase/reductase; part of the gene cluster that mediates the biosynthesis of the mycotoxin pyrichalasin H, a tyrosine-derived cytochalasan that inhibits the growth of rice seedlings, but also inhibits lymphocyte capping and actin polymerization and alters cell morphology. Pyrichalasin H is indicated as the responsible agent for the genus-specific pathogenicity of M.grisea toward crabgrass. The first step in the pathway is catalyzed by the O-methyltransferase pyiA which methylates free tyrosine to generate the precursor O-methyltyrosine. The hybrid PKS-NRPS pyiS, assisted by the enoyl reductase pyiC, are responsible for fusion of the O-methyltyrosine precursor and the polyketide backbone. The polyketide synthase module (PKS) of pyiS is responsible for the synthesis of the polyketide backbone and the downstream nonribosomal peptide synthetase (NRPS) amidates the carboxyl end of the polyketide with the O-methyltyrosine precursor. As the NRPS A-domain demonstrates substrate tolerance, pyiS can also use phenylalanine, tyrosine and even para-chlorophenylalanine as amino acid precursor, which leads to the production of novel cytochalasans, including halogenated cytochalasans. Because pyiS lacks a designated enoylreductase (ER) domain, the required activity is provided the enoyl reductase pyiC. Reduction by the hydrolyase pyiE leads to 1,5-dihydropyrrolone, which is substrate for dehydration and intra-molecular Diels-Alder cyclization by the Diels-Alderase pyiF to yield the required isoindolone-fused macrocycle. The tailoring cytochrome P450 monooxygenases piyD and piyG catalyze the hydroxylation at C-18 and C-7, respectivily, whereas the short-chain dehydrogenase/reductase pyiH reduces the carbonyl at C-21 in preparation for the transfer of an acetyl group by the acetyltransferase pyiB. These 3 reactions whose order is not clear yet, lead to the production of O-methylpyrichalasin J, a deacetylated pyrichalasin H. Finally, pyiB to converts O-methylpyrichalasin J into the final product pyrichalasin H via acetylation of C-21. The polypeptide is Short-chain dehydrogenase/reductase pyiH (Pyricularia grisea (Crabgrass-specific blast fungus)).